Reading from the N-terminus, the 3589-residue chain is D-lysergyl-peptide-synthetase subunit 1 (3589 aa).

Positions 344–742 (NCHSRPDSLA…IGRKDLQVKV (399 aa)) are adenylation (A) domain 1. The Carrier 1 domain maps to 883–952 (VERRLQLLFA…KLRDLAAASS (70 aa)). O-(pantetheine 4'-phosphoryl)serine is present on serine 915. The segment at 995–1380 (EDIYPCTSLQ…SQFQHILTQI (386 aa)) is condensation (C) domain 1. Residues 1424–1826 (QAKAQMQPEA…RRKDSQVKLR (403 aa)) form an adenylation (A) domain 2 region. Positions 1974–2042 (LERELQKIWA…TIEKLAAAAV (69 aa)) constitute a Carrier 2 domain. At serine 2006 the chain carries O-(pantetheine 4'-phosphoryl)serine. The condensation (C) domain 2 stretch occupies residues 2087-2509 (VEDIYPCSPI…IEMLDEEHRS (423 aa)). Residues 2534–2929 (CLESPESPAI…GRKDDQVKIR (396 aa)) form an adenylation (A) domain 3 region. Residues 3064-3132 (LETRLQELVG…RLSELAVVLN (69 aa)) enclose the Carrier 3 domain. Position 3096 is an O-(pantetheine 4'-phosphoryl)serine (serine 3096). The interval 3187 to 3585 (TNFIALHFSQ…TYPESLVSEL (399 aa)) is cyclization (Cyc) domain.

It belongs to the NRP synthetase family.

Its pathway is alkaloid biosynthesis; ergot alkaloid biosynthesis. Its function is as follows. D-lysergyl-peptide-synthetase subunit 1; part of the gene cluster that mediates the biosynthesis of fungal ergot alkaloid ergovaline, the predominant ergopeptine product in E.festucae var. lolii. DmaW catalyzes the first step of ergot alkaloid biosynthesis by condensing dimethylallyl diphosphate (DMAP) and tryptophan to form 4-dimethylallyl-L-tryptophan. The second step is catalyzed by the methyltransferase easF that methylates 4-dimethylallyl-L-tryptophan in the presence of S-adenosyl-L-methionine, resulting in the formation of 4-dimethylallyl-L-abrine. The catalase easC and the FAD-dependent oxidoreductase easE then transform 4-dimethylallyl-L-abrine to chanoclavine-I which is further oxidized by easD in the presence of NAD(+), resulting in the formation of chanoclavine-I aldehyde. Agroclavine dehydrogenase easG then mediates the conversion of chanoclavine-I aldehyde to agroclavine via a non-enzymatic adduct reaction: the substrate is an iminium intermediate that is formed spontaneously from chanoclavine-I aldehyde in the presence of glutathione. The presence of easA is not required to complete this reaction. Further conversion of agroclavine to paspalic acid is a two-step process involving oxidation of agroclavine to elymoclavine and of elymoclavine to paspalic acid, the second step being performed by the elymoclavine oxidase cloA. Paspalic acid is then further converted to D-lysergic acid. Ergovaline is assembled from D-lysergic acid and three different amino acids by the D-lysergyl-peptide-synthetase composed of a monomudular (lpsB) and a trimodular (lpsA) nonribosomal peptide synthetase subunit. In Epichloe festucae var. lolii (Neotyphodium lolii), this protein is D-lysergyl-peptide-synthetase subunit 1.